A 335-amino-acid polypeptide reads, in one-letter code: Acetyl-coenzyme A carboxylase carboxyl transferase subunit alpha (335 aa).

Residues 48–308 (TLEKKVDALR…KGMLIEELKA (261 aa)) form the CoA carboxyltransferase C-terminal domain.

The protein belongs to the AccA family. In terms of assembly, acetyl-CoA carboxylase is a heterohexamer composed of biotin carboxyl carrier protein (AccB), biotin carboxylase (AccC) and two subunits each of ACCase subunit alpha (AccA) and ACCase subunit beta (AccD).

The protein localises to the cytoplasm. The catalysed reaction is N(6)-carboxybiotinyl-L-lysyl-[protein] + acetyl-CoA = N(6)-biotinyl-L-lysyl-[protein] + malonyl-CoA. It functions in the pathway lipid metabolism; malonyl-CoA biosynthesis; malonyl-CoA from acetyl-CoA: step 1/1. Its function is as follows. Component of the acetyl coenzyme A carboxylase (ACC) complex. First, biotin carboxylase catalyzes the carboxylation of biotin on its carrier protein (BCCP) and then the CO(2) group is transferred by the carboxyltransferase to acetyl-CoA to form malonyl-CoA. The sequence is that of Acetyl-coenzyme A carboxylase carboxyl transferase subunit alpha from Chlorobium luteolum (strain DSM 273 / BCRC 81028 / 2530) (Pelodictyon luteolum).